An 88-amino-acid chain; its full sequence is MAHKKGVGSSKNGRESQSKRLGVKLFGGEVAKAGNIIVRQRGTVHHPGENVGIGKDHTLYALVDGVVTFRRGKENRSFVSVKEVVAEA.

This sequence belongs to the bacterial ribosomal protein bL27 family.

The chain is Large ribosomal subunit protein bL27 from Parabacteroides distasonis (strain ATCC 8503 / DSM 20701 / CIP 104284 / JCM 5825 / NCTC 11152).